We begin with the raw amino-acid sequence, 231 residues long: Ribose-5-phosphate isomerase A (231 aa).

Substrate-binding positions include 32-35 (TGST), 85-88 (DGAD), and 98-101 (KGGG). Catalysis depends on E107, which acts as the Proton acceptor. K125 contacts substrate.

This sequence belongs to the ribose 5-phosphate isomerase family. Homodimer.

The catalysed reaction is aldehydo-D-ribose 5-phosphate = D-ribulose 5-phosphate. It participates in carbohydrate degradation; pentose phosphate pathway; D-ribose 5-phosphate from D-ribulose 5-phosphate (non-oxidative stage): step 1/1. Catalyzes the reversible conversion of ribose-5-phosphate to ribulose 5-phosphate. This is Ribose-5-phosphate isomerase A from Paraburkholderia phytofirmans (strain DSM 17436 / LMG 22146 / PsJN) (Burkholderia phytofirmans).